The following is a 572-amino-acid chain: Sulfate adenylyltransferase (572 aa).

Residues 1–169 (MANTPHGGVL…IQAINKLNHY (169 aa)) are N-terminal. Residues 170-394 (DYVGLRYTPA…LRESHPPRAK (225 aa)) form a catalytic region. Position 197 (Gln-197) interacts with sulfate. ATP-binding positions include 197–200 (QTRN) and 291–294 (GRDH). Catalysis depends on residues Thr-198, Arg-199, and Asn-200. Arg-199 serves as a coordination point for sulfate. Ala-295 contacts sulfate. Position 333 (Met-333) interacts with ATP. The allosteric regulation domain; adenylyl-sulfate kinase-like stretch occupies residues 395–572 (QGFTIFLTGH…LLESQGFFGN (178 aa)). Residues 434–437 (ETVR), Arg-451, 477–478 (IA), and Lys-515 contribute to the 3'-phosphoadenylyl sulfate site.

This sequence in the N-terminal section; belongs to the sulfate adenylyltransferase family. It in the C-terminal section; belongs to the APS kinase family. As to quaternary structure, homohexamer. Dimer of trimers.

It is found in the cytoplasm. The enzyme catalyses sulfate + ATP + H(+) = adenosine 5'-phosphosulfate + diphosphate. The protein operates within sulfur metabolism; hydrogen sulfide biosynthesis; sulfite from sulfate: step 1/3. Its activity is regulated as follows. Allosterically inhibited by 3'-phosphoadenosine 5'-phosphosulfate (PAPS). Catalyzes the first intracellular reaction of sulfate assimilation, forming adenosine-5'-phosphosulfate (APS) from inorganic sulfate and ATP. Plays an important role in sulfate activation as a component of the biosynthesis pathway of sulfur-containing amino acids. This Yarrowia lipolytica (strain CLIB 122 / E 150) (Yeast) protein is Sulfate adenylyltransferase.